A 298-amino-acid chain; its full sequence is Serine/threonine-protein kinase 1 (298 aa).

Residues 38-276 form the Protein kinase domain; the sequence is FIATRPMFEG…FKSLVSHPWF (239 aa). ATP is bound by residues 45–53 and lysine 65; that span reads FEGGRNNVF. Aspartate 152 acts as the Proton acceptor in catalysis.

The protein belongs to the protein kinase superfamily. Ser/Thr protein kinase family.

It localises to the virion. The protein resides in the host cytoplasm. The enzyme catalyses L-seryl-[protein] + ATP = O-phospho-L-seryl-[protein] + ADP + H(+). The catalysed reaction is L-threonyl-[protein] + ATP = O-phospho-L-threonyl-[protein] + ADP + H(+). In terms of biological role, essential for viral replication. It may mediate the virus progression through DNA replication. This is Serine/threonine-protein kinase 1 from African swine fever virus (strain Badajoz 1971 Vero-adapted) (Ba71V).